The chain runs to 399 residues: Serine/threonine-protein kinase PknL (399 aa).

Residues Met1–Arg368 lie on the Cytoplasmic side of the membrane. The Protein kinase domain maps to Tyr19–Ile278. ATP is bound by residues Ile25–Val33 and Lys48. Residue Thr32 is modified to Phosphothreonine; by autocatalysis. Thr62 is modified (phosphothreonine; by autocatalysis). Asp142 (proton acceptor) is an active-site residue. Residues Thr173, Thr175, and Thr323 each carry the phosphothreonine; by autocatalysis modification. The tract at residues Gly312–Pro346 is disordered. A helical membrane pass occupies residues Met369 to Trp389. The Extracellular portion of the chain corresponds to Thr390–Leu399.

It belongs to the protein kinase superfamily. Ser/Thr protein kinase family. Post-translationally, autophosphorylated. Thr-173 is required for autophosphorylation and transphosphorylation activities. Thr-175 is not necessary for autophosphorylation activity, but is required for full kinase activity.

It localises to the cell membrane. It catalyses the reaction L-seryl-[protein] + ATP = O-phospho-L-seryl-[protein] + ADP + H(+). The catalysed reaction is L-threonyl-[protein] + ATP = O-phospho-L-threonyl-[protein] + ADP + H(+). Phosphorylates the DNA-binding protein MT2231. May be involved in the regulation of cell division and cell envelope biosynthesis. The chain is Serine/threonine-protein kinase PknL (pknL) from Mycobacterium tuberculosis (strain CDC 1551 / Oshkosh).